Consider the following 212-residue polypeptide: ECF RNA polymerase sigma factor SigD (212 aa).

The tract at residues 49–119 is sigma-70 factor domain-2; that stretch reads ETIRPIVVRY…VADAHRAAGR (71 aa). The Polymerase core binding signature appears at 75-78; it reads DVAQ. The tract at residues 152-201 is sigma-70 factor domain-4; it reads NELLEILPAKQREILILRVVVGLSAEETAAAVGSTTGAVRVAQHRALQRL. Residues 176–195 constitute a DNA-binding region (H-T-H motif); it reads AEETAAAVGSTTGAVRVAQH.

It belongs to the sigma-70 factor family. ECF subfamily. Interacts transiently with the RNA polymerase catalytic core formed by RpoA, RpoB, RpoC and RpoZ (2 alpha, 1 beta, 1 beta' and 1 omega subunit) to form the RNA polymerase holoenzyme that can initiate transcription. Interacts (via sigma-70 factor domain 4) with RsdA.

Functionally, sigma factors are initiation factors that promote the attachment of RNA polymerase to specific initiation sites and are then released. Extracytoplasmic function (ECF) sigma factors are held in an inactive form by an anti-sigma factor until released by regulated intramembrane proteolysis. The sequence is that of ECF RNA polymerase sigma factor SigD (sigD) from Mycobacterium bovis (strain ATCC BAA-935 / AF2122/97).